Consider the following 273-residue polypeptide: Formamidopyrimidine-DNA glycosylase (273 aa).

Pro-2 acts as the Schiff-base intermediate with DNA in catalysis. Glu-3 functions as the Proton donor in the catalytic mechanism. The Proton donor; for beta-elimination activity role is filled by Lys-57. 3 residues coordinate DNA: His-90, Arg-109, and Lys-150. The segment at 235-269 (KVYGRAGKECPVCSSKIEEEKIGQRNSFWCGKCQF) adopts an FPG-type zinc-finger fold. The active-site Proton donor; for delta-elimination activity is the Arg-259.

It belongs to the FPG family. As to quaternary structure, monomer. The cofactor is Zn(2+).

It catalyses the reaction Hydrolysis of DNA containing ring-opened 7-methylguanine residues, releasing 2,6-diamino-4-hydroxy-5-(N-methyl)formamidopyrimidine.. The enzyme catalyses 2'-deoxyribonucleotide-(2'-deoxyribose 5'-phosphate)-2'-deoxyribonucleotide-DNA = a 3'-end 2'-deoxyribonucleotide-(2,3-dehydro-2,3-deoxyribose 5'-phosphate)-DNA + a 5'-end 5'-phospho-2'-deoxyribonucleoside-DNA + H(+). Functionally, involved in base excision repair of DNA damaged by oxidation or by mutagenic agents. Acts as a DNA glycosylase that recognizes and removes damaged bases. Has a preference for oxidized purines, such as 7,8-dihydro-8-oxoguanine (8-oxoG). Has AP (apurinic/apyrimidinic) lyase activity and introduces nicks in the DNA strand. Cleaves the DNA backbone by beta-delta elimination to generate a single-strand break at the site of the removed base with both 3'- and 5'-phosphates. The protein is Formamidopyrimidine-DNA glycosylase of Aliivibrio fischeri (strain MJ11) (Vibrio fischeri).